A 494-amino-acid polypeptide reads, in one-letter code: Tripartite motif-containing protein 5 (494 aa).

N-acetylalanine is present on Ala2. The RING-type zinc-finger motif lies at 15–59; it reads CPICLELLTEPLSLDCGHSFCQACITANHKESMLHQGERSCPLCR. A B box-type zinc finger spans residues 91-132; that stretch reads QNVDHCARHGEKLLLFCEQDGNIICWLCERSQEHRGHNTFLV. Residues Cys96, His99, Cys118, and His124 each coordinate Zn(2+). The stretch at 132-223 forms a coiled coil; that stretch reads VEEVAQKYRE…RLVQSENDMV (92 aa). The segment at 186 to 199 is required for interaction with GABARAP and for autophagy; that stretch reads FKQLRDILDCEESN. The B30.2/SPRY domain maps to 280-494; that stretch reads PDLKRMLQVL…LPMTLCSPRS (215 aa).

The protein belongs to the TRIM/RBCC family. In terms of assembly, can form homodimers and homotrimers. In addition to lower-order dimerization, also exhibits a higher-order multimerization and both low- and high-order multimerizations are essential for its restriction activity. Interacts with BTBD1 and BTBD2. Interacts with PSMC4, PSMC5, PSMD7 and HSPA8/HSC70. Interacts (via B30.2/SPRY domain) with HSPA1A/B. Interacts with PSMC2, MAP3K7/TAK1, TAB2 and TAB3. Interacts with SQSTM1. Interacts with TRIM6 and TRIM34. Interacts with ULK1 (phosphorylated form), GABARAP, GABARAPL1, GABARAPL2, MAP1LC3A, MAP1LC3C and BECN1. Degraded in a proteasome-independent fashion in the absence of viral infection but in a proteasome-dependent fashion following exposure to restriction sensitive virus. Post-translationally, autoubiquitinated in a RING finger- and UBE2D2-dependent manner. Monoubiquitinated by TRIM21. Deubiquitinated by Yersinia YopJ. Ubiquitination may not lead to proteasomal degradation.

Its subcellular location is the cytoplasm. It is found in the nucleus. It catalyses the reaction S-ubiquitinyl-[E2 ubiquitin-conjugating enzyme]-L-cysteine + [acceptor protein]-L-lysine = [E2 ubiquitin-conjugating enzyme]-L-cysteine + N(6)-ubiquitinyl-[acceptor protein]-L-lysine.. It functions in the pathway protein modification; protein ubiquitination. Its function is as follows. Capsid-specific restriction factor that prevents infection from non-host-adapted retroviruses. Blocks viral replication early in the life cycle, after viral entry but before reverse transcription. In addition to acting as a capsid-specific restriction factor, also acts as a pattern recognition receptor that activates innate immune signaling in response to the retroviral capsid lattice. Binding to the viral capsid triggers its E3 ubiquitin ligase activity, and in concert with the heterodimeric ubiquitin conjugating enzyme complex UBE2V1-UBE2N (also known as UBC13-UEV1A complex) generates 'Lys-63'-linked polyubiquitin chains, which in turn are catalysts in the autophosphorylation of the MAP3K7/TAK1 complex (includes TAK1, TAB2, and TAB3). Activation of the MAP3K7/TAK1 complex by autophosphorylation results in the induction and expression of NF-kappa-B and MAPK-responsive inflammatory genes, thereby leading to an innate immune response in the infected cell. Restricts infection by simian immunodeficiency virus (SIV-mac). Plays a role in regulating autophagy through activation of autophagy regulator BECN1 by causing its dissociation from its inhibitors BCL2 and TAB2. The polypeptide is Tripartite motif-containing protein 5 (TRIM5) (Saimiri sciureus (Common squirrel monkey)).